The following is a 144-amino-acid chain: NADH dehydrogenase [ubiquinone] 1 alpha subcomplex subunit 13 (144 aa).

A2 carries the N-acetylalanine modification. The chain crosses the membrane as a helical span at residues 30–51 (LSGYSMLAIGIGTLIYGHWSIM). An important for inducing cell death region spans residues 102 to 144 (PDWKVGESVFHTTRWVPPLIGELYGLRTTEEALHASHGFMWYT).

The protein belongs to the complex I NDUFA13 subunit family. In terms of assembly, complex I is composed of 45 different subunits. Interacts with CARD15, but not with CARD4. Interacts with STAT3, but not with STAT1, STAT2 and STAT5A. Interacts with OLFM4. (Microbial infection) Interacts with HHV-8 IRF1, in the nucleus, with HPV-16 E6 and SV40 LT. In terms of tissue distribution, widely expressed, with highest expression in heart, skeletal muscle, liver, kidney and placenta. In intestinal mucosa, down-regulated in areas involved in Crohn disease and ulcerative colitis.

It localises to the mitochondrion inner membrane. The protein localises to the nucleus. In terms of biological role, accessory subunit of the mitochondrial membrane respiratory chain NADH dehydrogenase (Complex I), that is believed not to be involved in catalysis. Complex I functions in the transfer of electrons from NADH to the respiratory chain. The immediate electron acceptor for the enzyme is believed to be ubiquinone. Involved in the interferon/all-trans-retinoic acid (IFN/RA) induced cell death. This apoptotic activity is inhibited by interaction with viral IRF1. Prevents the transactivation of STAT3 target genes. May play a role in CARD15-mediated innate mucosal responses and serve to regulate intestinal epithelial cell responses to microbes. This chain is NADH dehydrogenase [ubiquinone] 1 alpha subcomplex subunit 13 (NDUFA13), found in Homo sapiens (Human).